The sequence spans 116 residues: MSLLMTIITITALLSTILAIVSFWLPQISPDHEKLSPYECGFDPMGSARLPFSLRFFLIAILFLLFDLEIALLLPLPWGDQLPTPLLTFTWATAVLFLLTLGLIYEWIQGGLEWAE.

The next 3 membrane-spanning stretches (helical) occupy residues 3 to 23 (LLMT…IVSF), 56 to 76 (FFLI…LLPL), and 85 to 105 (PLLT…GLIY).

This sequence belongs to the complex I subunit 3 family.

The protein localises to the mitochondrion membrane. The enzyme catalyses a ubiquinone + NADH + 5 H(+)(in) = a ubiquinol + NAD(+) + 4 H(+)(out). Core subunit of the mitochondrial membrane respiratory chain NADH dehydrogenase (Complex I) that is believed to belong to the minimal assembly required for catalysis. Complex I functions in the transfer of electrons from NADH to the respiratory chain. The immediate electron acceptor for the enzyme is believed to be ubiquinone. The polypeptide is NADH-ubiquinone oxidoreductase chain 3 (MT-ND3) (Paralichthys olivaceus (Bastard halibut)).